The primary structure comprises 423 residues: Maltooligosaccharide ABC transporter solute-binding lipoprotein (423 aa).

An N-terminal signal peptide occupies residues 1-24; the sequence is MSSKFMKSTAVLGTVTLASLLLVA. Cysteine 25 is lipidated: N-palmitoyl cysteine. The S-diacylglycerol cysteine moiety is linked to residue cysteine 25. Substrate-binding positions include tyrosine 52, aspartate 77, aspartate 83, 103-104, glutamate 148, aspartate 193, asparagine 196, 251-254, tryptophan 274, and lysine 307; these read DR and EGAG.

This sequence belongs to the bacterial solute-binding protein 1 family.

The protein resides in the cell membrane. Its function is as follows. Part of an ABC transporter complex involved in the uptake of maltodextrins. Binds glycogen-derived linear maltooligosaccharides increasing in size from maltotriose to maltooctaose with the highest affinity for maltotriose. Has a very weak affinity for maltose. Has also a very low affinity for maltotetraitol, indicating that the binding is selective for maltooligosaccharides with an intact reducing end. This is Maltooligosaccharide ABC transporter solute-binding lipoprotein (malX) from Streptococcus pneumoniae (strain ATCC BAA-255 / R6).